Reading from the N-terminus, the 723-residue chain is Probable inactive serine/threonine-protein kinase fnkD (723 aa).

In terms of domain architecture, Protein kinase spans 33–276; that stretch reads WEIITQLESN…TTSLPKYSTL (244 aa). FNIP repeat units lie at residues 301–342, 343–384, 385–426, 524–565, 566–606, and 647–690; these read FNQP…ELAS, FNQT…LLSS, FNQP…SLAS, FNQS…ILPS, FNHP…LGDE, and FNIE…FGIT.

It belongs to the protein kinase superfamily. STE Ser/Thr protein kinase family.

This Dictyostelium discoideum (Social amoeba) protein is Probable inactive serine/threonine-protein kinase fnkD (fnkD-1).